Reading from the N-terminus, the 299-residue chain is Probable 4-deoxy-4-formamido-L-arabinose-phosphoundecaprenol deformylase ArnD (299 aa).

A NodB homology domain is found at 2–263 (IDVGLRIDVD…EASARGIRFV (262 aa)).

This sequence belongs to the polysaccharide deacetylase family. ArnD deformylase subfamily.

The catalysed reaction is 4-deoxy-4-formamido-alpha-L-arabinopyranosyl di-trans,octa-cis-undecaprenyl phosphate + H2O = 4-amino-4-deoxy-alpha-L-arabinopyranosyl di-trans,octa-cis-undecaprenyl phosphate + formate. It participates in glycolipid biosynthesis; 4-amino-4-deoxy-alpha-L-arabinose undecaprenyl phosphate biosynthesis; 4-amino-4-deoxy-alpha-L-arabinose undecaprenyl phosphate from UDP-4-deoxy-4-formamido-beta-L-arabinose and undecaprenyl phosphate: step 2/2. It functions in the pathway bacterial outer membrane biogenesis; lipopolysaccharide biosynthesis. Functionally, catalyzes the deformylation of 4-deoxy-4-formamido-L-arabinose-phosphoundecaprenol to 4-amino-4-deoxy-L-arabinose-phosphoundecaprenol. The modified arabinose is attached to lipid A and is required for resistance to polymyxin and cationic antimicrobial peptides. The sequence is that of Probable 4-deoxy-4-formamido-L-arabinose-phosphoundecaprenol deformylase ArnD from Aeromonas salmonicida (strain A449).